Consider the following 349-residue polypeptide: Glycerol-3-phosphate dehydrogenase [NAD(+)], cytoplasmic (349 aa).

10 to 15 contributes to the NAD(+) binding site; it reads GSGNWG. Lysine 120 contributes to the substrate binding site. Alanine 153 contacts NAD(+). Serine 154 carries the post-translational modification Phosphoserine. The active-site Proton acceptor is the lysine 204. Residue arginine 269 coordinates NAD(+). 269-270 serves as a coordination point for substrate; the sequence is RN. An N6-succinyllysine modification is found at lysine 289. NAD(+) is bound by residues lysine 296 and glutamine 298. Tyrosine 326 carries the post-translational modification Phosphotyrosine.

Belongs to the NAD-dependent glycerol-3-phosphate dehydrogenase family. Homodimer.

It localises to the cytoplasm. The catalysed reaction is sn-glycerol 3-phosphate + NAD(+) = dihydroxyacetone phosphate + NADH + H(+). Functionally, has glycerol-3-phosphate dehydrogenase activity. This Mus musculus (Mouse) protein is Glycerol-3-phosphate dehydrogenase [NAD(+)], cytoplasmic.